Reading from the N-terminus, the 464-residue chain is Argininosuccinate lyase (464 aa).

The protein belongs to the lyase 1 family. Argininosuccinate lyase subfamily.

Its subcellular location is the cytoplasm. It carries out the reaction 2-(N(omega)-L-arginino)succinate = fumarate + L-arginine. Its pathway is amino-acid biosynthesis; L-arginine biosynthesis; L-arginine from L-ornithine and carbamoyl phosphate: step 3/3. The polypeptide is Argininosuccinate lyase (Janthinobacterium sp. (strain Marseille) (Minibacterium massiliensis)).